The primary structure comprises 510 residues: NAD(P)H-quinone oxidoreductase subunit 2 A, chloroplastic (510 aa).

The next 14 helical transmembrane spans lie at 31 to 51 (LIFPECILIFGLILLLMIDLT), 57 to 77 (IPWLYFISSTSLVMSITALLF), 99 to 119 (IFQFLILLCSTLCIPLSVEYI), 124 to 144 (MAITEFLLFVLTATLGGMFLC), 149 to 169 (LITIFVALECFSLCSYLLSGY), 184 to 204 (LLMGGASSSILVYGFSWLYGL), 229 to 249 (ISIALIFITVGIGFKLSLAPF), 261 to 281 (PTPVVAFLSVTSKVAALALAT), 295 to 315 (WHLLLEILAILSMILGNLIAI), 323 to 343 (MLAYSSIGQIGYVIIGIIVGD), 354 to 374 (YMLFYISMNLGTFACIVLFGL), 395 to 415 (ALSLALCLLSLGGLPPLAGFF), 418 to 438 (LYLFWCGWQAGLYFLVLIGLL), and 484 to 504 (MIVCVIASTILGISMNPIIAI).

The protein belongs to the complex I subunit 2 family. NDH is composed of at least 16 different subunits, 5 of which are encoded in the nucleus.

It is found in the plastid. Its subcellular location is the chloroplast thylakoid membrane. It carries out the reaction a plastoquinone + NADH + (n+1) H(+)(in) = a plastoquinol + NAD(+) + n H(+)(out). The enzyme catalyses a plastoquinone + NADPH + (n+1) H(+)(in) = a plastoquinol + NADP(+) + n H(+)(out). Functionally, NDH shuttles electrons from NAD(P)H:plastoquinone, via FMN and iron-sulfur (Fe-S) centers, to quinones in the photosynthetic chain and possibly in a chloroplast respiratory chain. The immediate electron acceptor for the enzyme in this species is believed to be plastoquinone. Couples the redox reaction to proton translocation, and thus conserves the redox energy in a proton gradient. This is NAD(P)H-quinone oxidoreductase subunit 2 A, chloroplastic from Nicotiana tabacum (Common tobacco).